The chain runs to 188 residues: Protein Cripto (188 aa).

Positions 1-30 (MDCRKMARFSYSVIWIMAISKVFELGLVAG) are cleaved as a signal peptide. An EGF-like domain is found at 78–107 (LNRTCCLNGGTCMLGSFCACPPSFYGRNCE). A glycan (N-linked (GlcNAc...) asparagine) is linked at Asn79. Cystine bridges form between Cys82–Cys89, Cys83–Cys95, Cys97–Cys106, Cys115–Cys133, Cys128–Cys149, and Cys131–Cys140. Asp150 is lipidated: GPI-anchor amidated aspartate. Positions 151–188 (GLVMDEHLVASRTPELPPSARTTTFMLVGICLSIQSYY) are cleaved as a propeptide — removed in mature form.

This sequence belongs to the EGF-CFC (Cripto-1/FRL1/Cryptic) family. In terms of assembly, interacts with the activin type-1 receptor ACVR1B. Post-translationally, the GPI-anchor is attached to the protein in the endoplasmic reticulum and serves to target the protein to the cell surface. There, it is processed by GPI processing phospholipase A2 (TMEM8A), removing an acyl-chain at the sn-2 position of GPI and releasing CRIPTO as a lysophosphatidylinositol-bearing form, which is further cleaved by phospholipase D (GPLD1) into a soluble form. In terms of tissue distribution, preferentially expressed in gastric and colorectal carcinomas than in their normal counterparts. Expressed in breast and lung.

It is found in the cell membrane. It localises to the secreted. Functionally, GPI-anchored cell membrane protein involved in Nodal signaling. Cell-associated CRIPTO acts as a Nodal coreceptor in cis. Shedding of CRIPTO by TMEM8A modulates Nodal signaling by allowing soluble CRIPTO to act as a Nodal coreceptor on other cells. Could play a role in the determination of the epiblastic cells that subsequently give rise to the mesoderm. This is Protein Cripto from Homo sapiens (Human).